The sequence spans 497 residues: Cytochrome P450 71A14 (497 aa).

Residues methionine 3 to leucine 23 traverse the membrane as a helical segment. Residue cysteine 440 coordinates heme.

It belongs to the cytochrome P450 family. Heme is required as a cofactor.

Its subcellular location is the membrane. This is Cytochrome P450 71A14 (CYP71A14) from Arabidopsis thaliana (Mouse-ear cress).